Here is a 248-residue protein sequence, read N- to C-terminus: MSTPFYVSPQQAMADRAEYARKGIARGRSLVVLQYADGIVFVGENPSRALHKFSEIYDRIGFAAAGKYNEYENLRIGGVRYADLRGYTYDRDDVTARGLANVYAQTLGTIFSSAAEKPYEVELVVAEVGETPEGDQIYRLPHDGSIVDEHGSVAVGGNAEQISSYLDQRHQDGMSLAEALKLAVQALSRDTNGTQREIPAERLEVAVLDRTRPQQRKFKRIVGRQLDRLLEADGATTEAESSAEEEDE.

The interval 229-248 (LLEADGATTEAESSAEEEDE) is disordered.

Belongs to the peptidase T1A family. In terms of assembly, the 20S proteasome core is composed of 14 alpha and 14 beta subunits that assemble into four stacked heptameric rings, resulting in a barrel-shaped structure. The two inner rings, each composed of seven catalytic beta subunits, are sandwiched by two outer rings, each composed of seven alpha subunits. The catalytic chamber with the active sites is on the inside of the barrel. Has a gated structure, the ends of the cylinder being occluded by the N-termini of the alpha-subunits. Is capped by the proteasome-associated ATPase, ARC.

The protein resides in the cytoplasm. The protein operates within protein degradation; proteasomal Pup-dependent pathway. The formation of the proteasomal ATPase ARC-20S proteasome complex, likely via the docking of the C-termini of ARC into the intersubunit pockets in the alpha-rings, may trigger opening of the gate for substrate entry. Interconversion between the open-gate and close-gate conformations leads to a dynamic regulation of the 20S proteasome proteolysis activity. In terms of biological role, component of the proteasome core, a large protease complex with broad specificity involved in protein degradation. This is Proteasome subunit alpha from Streptomyces scabiei (strain 87.22).